We begin with the raw amino-acid sequence, 352 residues long: MALPFRKDLGDYKDLDEDELLGKLSESELKQLETVLDDLDPENALLPAGFRQKNQTSKSATGPFDRERLLSYLEKQALEHKDRDDYVPYTGEKKGKIFIPKQKPAQTLTEETISLDPELEEALTSASDTELCDLAAILGMHNLIADTPFCDVLGSSNGVNQERFPNVVKGEKILPVFDEPPNPTNVEESLKRIRENDARLVEVNLNNIKNIPIPTLKDFAKTLEANTHVKHFSLAATRSNDPVAVAFADMLKVNKTLKSLNMESNFITGAGVLALIDALRDNETLMELKIDNQRQQLGTSVELEMAKMLEENTNILKFGYQFTQQGPRTRAANAITKNNDLVRKRRIEGDHQ.

Serine 25 carries the post-translational modification Phosphoserine.

The protein belongs to the tropomodulin family. As to quaternary structure, binds to the N-terminus of tropomyosin and to actin. Interacts with FLII. Ubiquitous.

Its subcellular location is the cytoplasm. It localises to the cytoskeleton. In terms of biological role, blocks the elongation and depolymerization of the actin filaments at the pointed end. The Tmod/TM complex contributes to the formation of the short actin protofilament, which in turn defines the geometry of the membrane skeleton. In Mus musculus (Mouse), this protein is Tropomodulin-3 (Tmod3).